Consider the following 304-residue polypeptide: Mitochondrial RNA-splicing protein MRS4 (304 aa).

3 Solcar repeats span residues 21–108 (APLH…CKAR), 118–200 (HQPM…ASKF), and 207–300 (YNPL…AKHF). A run of 6 helical transmembrane segments spans residues 23–41 (LHSQ…HSLM), 83–102 (GVQS…FGTY), 120–139 (PMKT…ALMN), 175–194 (SYPT…FMIY), 209–228 (PLIH…ALTT), and 275–288 (GLKP…PATA).

Belongs to the mitochondrial carrier (TC 2.A.29) family.

The protein resides in the mitochondrion inner membrane. Its function is as follows. MRS4 suppresses a mitochondrial splice defect in the first intron of the COB gene. It may act as a carrier, exerting its suppressor activity via modulation of solute concentrations in the mitochondrion (possibly of cations). Not essential. The chain is Mitochondrial RNA-splicing protein MRS4 (MRS4) from Saccharomyces cerevisiae (strain ATCC 204508 / S288c) (Baker's yeast).